The primary structure comprises 495 residues: MASIRRTLSFSERHQKLVDINYCKKLHVEALQRLQNQTRDQMVQNENDDRAERKRFLRLLQDEQFELDMEEAIQKAEENKRLRELQLAQEEKLATELAKLKRESLKDEKLRQQVRENSAELRELEKKLKAAYMNKERAAQIAEKDAIKYGQMKRDAEIARTMMEEHERLIKEESAAEDKRNQAKAQYSHDLEKQLEEQGKKKQEAYEQLLKEKLMIDEIVRKIYEEDQLERQQRLEKMNTTRRYIEEFQKEQALWRKKKREEMEEENRKIIEFAKLQQQREEDRMAKVQEKVKKKRLQLKNMLTQRLEEMLRQREDLEQVRQELYQEEQAEIYKKKLEEEAEEKLRKQKELKQDFMDQMALKELILQAAKEEEETFRKAMLAKFAEDDRIELMNAQKPRMKQLEHKRAVEKLIEERRNQFLADKQRELEEWQWQQRRQGCINAIVEEERLKLLKEHATKLLGYLPKGVFKNEDDIDMLGEEFRKAYQKRSEICEK.

The interval 1–315 (MASIRRTLSF…RLEEMLRQRE (315 aa)) is interaction with BBOF1. Coiled coils occupy residues 61 to 215 (QDEQ…EKLM) and 245 to 361 (IEEF…QMAL). The tract at residues 172-199 (EESAAEDKRNQAKAQYSHDLEKQLEEQG) is disordered.

The protein belongs to the MNS1 family. In terms of assembly, able to form oligomers. Microtubule inner protein component of sperm flagellar doublet microtubules. Interacts with ODAD1. Interacts with BBOF1. In terms of tissue distribution, expressed in trachea multiciliated cells.

It localises to the nucleus. It is found in the cytoplasm. Its subcellular location is the cytoskeleton. The protein localises to the cilium axoneme. The protein resides in the flagellum axoneme. Microtubule inner protein (MIP) part of the dynein-decorated doublet microtubules (DMTs) in cilia axoneme, which is required for motile cilia beating. May play a role in the control of meiotic division and germ cell differentiation through regulation of pairing and recombination during meiosis. Required for sperm flagella assembly. May play a role in the assembly and function of the outer dynein arm-docking complex (ODA-DC). ODA-DC mediates outer dynein arms (ODA) binding onto the axonemal doublet microtubules. This chain is Meiosis-specific nuclear structural protein 1 (MNS1), found in Bos taurus (Bovine).